A 612-amino-acid polypeptide reads, in one-letter code: Chaperone protein DnaK (612 aa).

Position 173 is a phosphothreonine; by autocatalysis (Thr-173). A disordered region spans residues 576–612; sequence AAKAQQAEGGANAEGKKADDNVVDAEYEEVKDDETKK. Residues 578–588 are compositionally biased toward low complexity; it reads KAQQAEGGANA. Over residues 596 to 612 the composition is skewed to acidic residues; the sequence is NVVDAEYEEVKDDETKK.

This sequence belongs to the heat shock protein 70 family.

Acts as a chaperone. In Bacillus velezensis (strain DSM 23117 / BGSC 10A6 / LMG 26770 / FZB42) (Bacillus amyloliquefaciens subsp. plantarum), this protein is Chaperone protein DnaK.